We begin with the raw amino-acid sequence, 260 residues long: Triosephosphate isomerase (260 aa).

11–13 contacts substrate; it reads NWK. His-103 functions as the Electrophile in the catalytic mechanism. Glu-175 acts as the Proton acceptor in catalysis. Substrate-binding positions include Gly-181, Ser-220, and 241-242; that span reads GG.

It belongs to the triosephosphate isomerase family. Homodimer.

Its subcellular location is the cytoplasm. The catalysed reaction is D-glyceraldehyde 3-phosphate = dihydroxyacetone phosphate. It participates in carbohydrate biosynthesis; gluconeogenesis. It functions in the pathway carbohydrate degradation; glycolysis; D-glyceraldehyde 3-phosphate from glycerone phosphate: step 1/1. In terms of biological role, involved in the gluconeogenesis. Catalyzes stereospecifically the conversion of dihydroxyacetone phosphate (DHAP) to D-glyceraldehyde-3-phosphate (G3P). This Shewanella pealeana (strain ATCC 700345 / ANG-SQ1) protein is Triosephosphate isomerase.